The chain runs to 382 residues: Sphingosine 1-phosphate receptor 1 (382 aa).

Residues 1–46 are Extracellular-facing; that stretch reads MGSTRIPLVKALHSPVSDYVNYDIIVRHYNYTGKLKISADKDNGIK. Lysine 10 is subject to N6-acetyllysine. The N-linked (GlcNAc...) asparagine glycan is linked to asparagine 30. Residues 47 to 68 form a helical membrane-spanning segment; sequence LISVVFILICCFIILENIFVLL. Residues 69–82 lie on the Cytoplasmic side of the membrane; sequence TIWKTKKFHRPMYY. The helical transmembrane segment at 83–104 threads the bilayer; it reads FIGNLALSDLLAGVAYTANLLL. The Extracellular portion of the chain corresponds to 105–116; that stretch reads SGATTYKLTPAQ. A helical transmembrane segment spans residues 117 to 138; that stretch reads WFLREGSMFVALSASVFSLLAI. Position 120–121 (120–121) interacts with sphing-4-enine 1-phosphate; the sequence is RE. Over 139–160 the chain is Cytoplasmic; the sequence is AIERYITMLKMKLHNGSNRFRS. A helical membrane pass occupies residues 161–182; the sequence is FLLISACWVISLILGGLPIMGW. Residues 183–196 lie on the Extracellular side of the membrane; the sequence is NCISTLPSCSTVLP. A disulfide bridge links cysteine 184 with cysteine 191. A helical transmembrane segment spans residues 197–224; sequence LYHKHYILFCTTVFTLLLLSIVILYCRI. Over 225–257 the chain is Cytoplasmic; sequence YSLVRTRSRRLTFRKNISKASRSSEKSLALLKT. A Phosphothreonine; by PKB/AKT1 modification is found at threonine 236. A helical membrane pass occupies residues 258–278; it reads VIIVLGVFIACWAPLFILLLL. Residue 265–269 participates in sphing-4-enine 1-phosphate binding; sequence FIACW. Residues 279–289 are Extracellular-facing; sequence DVGCKVKTCDI. A disulfide bridge connects residues cysteine 282 and cysteine 287. Residues 290 to 310 form a helical membrane-spanning segment; it reads LFRTEYFLVLAVLNSGTNPII. Over 311-382 the chain is Cytoplasmic; that stretch reads YTLSNKEMRR…MSSGNVNSSS (72 aa). Cysteine 328 carries the S-palmitoyl cysteine lipid modification. Residues 349–382 are disordered; sequence EFSRSKSDNSSHPQKDDGDNPETIMSSGNVNSSS. Phosphoserine is present on residues serine 351 and serine 353. A compositionally biased stretch (basic and acidic residues) spans 351-366; the sequence is SRSKSDNSSHPQKDDG. Positions 371 to 382 are enriched in polar residues; the sequence is TIMSSGNVNSSS.

This sequence belongs to the G-protein coupled receptor 1 family. As to quaternary structure, interacts with GNAI1 and GNAI3. Interacts with CD69; this interaction promotes S1PR1 degradation. S1P-induced endothelial cell migration requires the PKB/AKT1-mediated phosphorylation of the third intracellular loop at the Thr-236 residue. Post-translationally, palmitoylated by ZDHHC5. Palmitoylation is required for targeting to plasma membrane, enabling G(i) coupling.

It localises to the cell membrane. Its subcellular location is the endosome. The protein resides in the membrane raft. In terms of biological role, G-protein coupled receptor for the bioactive lysosphingolipid sphingosine 1-phosphate (S1P) that seems to be coupled to the G(i) subclass of heteromeric G proteins. Signaling leads to the activation of RAC1, SRC, PTK2/FAK1 and MAP kinases. Plays an important role in cell migration, probably via its role in the reorganization of the actin cytoskeleton and the formation of lamellipodia in response to stimuli that increase the activity of the sphingosine kinase SPHK1. Required for normal chemotaxis toward sphingosine 1-phosphate. Required for normal embryonic heart development and normal cardiac morphogenesis. Plays an important role in the regulation of sprouting angiogenesis and vascular maturation. Inhibits sprouting angiogenesis to prevent excessive sprouting during blood vessel development. Required for normal egress of mature T-cells from the thymus into the blood stream and into peripheral lymphoid organs. Plays a role in the migration of osteoclast precursor cells, the regulation of bone mineralization and bone homeostasis. Plays a role in responses to oxidized 1-palmitoyl-2-arachidonoyl-sn-glycero-3-phosphocholine by pulmonary endothelial cells and in the protection against ventilator-induced lung injury. The polypeptide is Sphingosine 1-phosphate receptor 1 (S1PR1) (Bos taurus (Bovine)).